The chain runs to 387 residues: MNRWLLPEDIADVLPAQARKVETLRRAILDLYQSYGYELVAPPILEFLDSLLTGTGSDLNLQTFKLVDQLSGRTLGLRADITPQVARIDAHLLNRAGVTRLCYAGSVAQALTPVGGSSREQLQLGAEIYGCANGEADFEAITLLLKTLDLAGLKKVYLDLSHAGILTGILEGQQLDKESIETLYGLLQSKDRPRLRQWATCLPAKLAADLLALTELNGPCTEVIANAKKVLPRHAAVDQALADLECVVSAASKSLSGVELSIDLADLRGYQYHSGVMFAAYVDGLPQPIARGGRYDQVGKAFGRSRPATGFSLDLLTLAGLSPLNCRKLAVLAPWIDDADLNQVIADLRNRGEVVIQVLPGEVLEAAEYECDRELVKQGNSWELKKK.

The protein belongs to the class-II aminoacyl-tRNA synthetase family. HisZ subfamily. Heteromultimer composed of HisG and HisZ subunits.

Its subcellular location is the cytoplasm. The protein operates within amino-acid biosynthesis; L-histidine biosynthesis; L-histidine from 5-phospho-alpha-D-ribose 1-diphosphate: step 1/9. In terms of biological role, required for the first step of histidine biosynthesis. May allow the feedback regulation of ATP phosphoribosyltransferase activity by histidine. This chain is ATP phosphoribosyltransferase regulatory subunit, found in Polynucleobacter asymbioticus (strain DSM 18221 / CIP 109841 / QLW-P1DMWA-1) (Polynucleobacter necessarius subsp. asymbioticus).